The primary structure comprises 97 residues: NADH-ubiquinone oxidoreductase chain 4L (97 aa).

The next 3 membrane-spanning stretches (helical) occupy residues 1-21, 23-43, and 60-80; these read MALL…ILLN, LHFL…FIGI, and LLLL…MVAL.

Belongs to the complex I subunit 4L family.

It is found in the mitochondrion membrane. It carries out the reaction a ubiquinone + NADH + 5 H(+)(in) = a ubiquinol + NAD(+) + 4 H(+)(out). Functionally, core subunit of the mitochondrial membrane respiratory chain NADH dehydrogenase (Complex I) that is believed to belong to the minimal assembly required for catalysis. Complex I functions in the transfer of electrons from NADH to the respiratory chain. The immediate electron acceptor for the enzyme is believed to be ubiquinone. The polypeptide is NADH-ubiquinone oxidoreductase chain 4L (ND4L) (Paracentrotus lividus (Common sea urchin)).